The chain runs to 74 residues: Antitoxin VapB39 (74 aa).

Its function is as follows. Antitoxin component of a type II toxin-antitoxin (TA) system. In Mycobacterium tuberculosis (strain CDC 1551 / Oshkosh), this protein is Antitoxin VapB39 (vapB39).